The primary structure comprises 248 residues: Triosephosphate isomerase (248 aa).

9 to 11 (NWK) serves as a coordination point for substrate. His94 acts as the Electrophile in catalysis. The active-site Proton acceptor is the Glu166. Substrate-binding positions include Gly172, Ser212, and 233-234 (GG).

The protein belongs to the triosephosphate isomerase family. In terms of assembly, homodimer.

It is found in the cytoplasm. It carries out the reaction D-glyceraldehyde 3-phosphate = dihydroxyacetone phosphate. It functions in the pathway carbohydrate biosynthesis; gluconeogenesis. It participates in carbohydrate degradation; glycolysis; D-glyceraldehyde 3-phosphate from glycerone phosphate: step 1/1. Involved in the gluconeogenesis. Catalyzes stereospecifically the conversion of dihydroxyacetone phosphate (DHAP) to D-glyceraldehyde-3-phosphate (G3P). This chain is Triosephosphate isomerase, found in Thermoanaerobacter pseudethanolicus (strain ATCC 33223 / 39E) (Clostridium thermohydrosulfuricum).